The primary structure comprises 385 residues: Aryl-alcohol dehydrogenase [NADP(+)] (385 aa).

Tyr-76 (proton donor) is an active-site residue. 238 to 248 (NVLCAGKIRTD) is a binding site for NADP(+).

The protein belongs to the aldo/keto reductase family. Aldo/keto reductase 2 subfamily. The N-terminus is blocked.

It catalyses the reaction an aromatic primary alcohol + NADP(+) = an aromatic aldehyde + NADPH + H(+). In Phanerodontia chrysosporium (White-rot fungus), this protein is Aryl-alcohol dehydrogenase [NADP(+)].